Reading from the N-terminus, the 36-residue chain is Photosystem I reaction center subunit VIII (36 aa).

A helical membrane pass occupies residues 7–29; that stretch reads PSILVPLVGLVFPAITLASLFIY.

Belongs to the PsaI family.

Its subcellular location is the plastid. It localises to the chloroplast thylakoid membrane. May help in the organization of the PsaL subunit. This Anthoceros angustus (Hornwort) protein is Photosystem I reaction center subunit VIII.